The chain runs to 171 residues: Skp-like protein (171 aa).

Residues 1 to 21 (MKKLLFSTFLLVLGSTSAAHA) form the signal peptide.

The protein belongs to the Skp family.

The sequence is that of Skp-like protein from Chlamydia pneumoniae (Chlamydophila pneumoniae).